The primary structure comprises 41 residues: Large ribosomal subunit protein bL36B (41 aa).

The protein belongs to the bacterial ribosomal protein bL36 family.

The chain is Large ribosomal subunit protein bL36B from Actinobacillus pleuropneumoniae serotype 5b (strain L20).